The primary structure comprises 127 residues: Aspartate 1-decarboxylase (127 aa).

Residue S25 is the Schiff-base intermediate with substrate; via pyruvic acid of the active site. Residue S25 is modified to Pyruvic acid (Ser). T57 is a binding site for substrate. Y58 acts as the Proton donor in catalysis. A substrate-binding site is contributed by 73–75; it reads GSA.

Belongs to the PanD family. As to quaternary structure, heterooctamer of four alpha and four beta subunits. The cofactor is pyruvate. In terms of processing, is synthesized initially as an inactive proenzyme, which is activated by self-cleavage at a specific serine bond to produce a beta-subunit with a hydroxyl group at its C-terminus and an alpha-subunit with a pyruvoyl group at its N-terminus.

Its subcellular location is the cytoplasm. The enzyme catalyses L-aspartate + H(+) = beta-alanine + CO2. It functions in the pathway cofactor biosynthesis; (R)-pantothenate biosynthesis; beta-alanine from L-aspartate: step 1/1. Catalyzes the pyruvoyl-dependent decarboxylation of aspartate to produce beta-alanine. This chain is Aspartate 1-decarboxylase, found in Polaromonas naphthalenivorans (strain CJ2).